An 81-amino-acid chain; its full sequence is uncharacterized protein (81 aa).

The tract at residues Met1–Ile58 is disordered. The span at Ala30–Ile58 shows a compositional bias: low complexity.

This is an uncharacterized protein from Caenorhabditis elegans.